Here is a 68-residue protein sequence, read N- to C-terminus: uncharacterized protein (68 aa).

The signal sequence occupies residues 1–28; that stretch reads MNKEQSADDPSVDLIRVKNMLNSTISMS.

This is an uncharacterized protein from Escherichia coli (strain K12).